The chain runs to 699 residues: Glycine--tRNA ligase beta subunit (699 aa).

The protein belongs to the class-II aminoacyl-tRNA synthetase family. As to quaternary structure, tetramer of two alpha and two beta subunits.

Its subcellular location is the cytoplasm. The catalysed reaction is tRNA(Gly) + glycine + ATP = glycyl-tRNA(Gly) + AMP + diphosphate. This Methylobacterium radiotolerans (strain ATCC 27329 / DSM 1819 / JCM 2831 / NBRC 15690 / NCIMB 10815 / 0-1) protein is Glycine--tRNA ligase beta subunit.